The following is a 443-amino-acid chain: Probable glycine dehydrogenase (decarboxylating) subunit 1 (443 aa).

This sequence belongs to the GcvP family. N-terminal subunit subfamily. The glycine cleavage system is composed of four proteins: P, T, L and H. In this organism, the P 'protein' is a heterodimer of two subunits.

The catalysed reaction is N(6)-[(R)-lipoyl]-L-lysyl-[glycine-cleavage complex H protein] + glycine + H(+) = N(6)-[(R)-S(8)-aminomethyldihydrolipoyl]-L-lysyl-[glycine-cleavage complex H protein] + CO2. In terms of biological role, the glycine cleavage system catalyzes the degradation of glycine. The P protein binds the alpha-amino group of glycine through its pyridoxal phosphate cofactor; CO(2) is released and the remaining methylamine moiety is then transferred to the lipoamide cofactor of the H protein. The chain is Probable glycine dehydrogenase (decarboxylating) subunit 1 from Chloroherpeton thalassium (strain ATCC 35110 / GB-78).